The chain runs to 445 residues: Methionine aminopeptidase 2-1 (445 aa).

Positions 1-86 are disordered; the sequence is MAAQASEDLQ…VQSEPPRVPL (86 aa). The segment covering 34 to 46 has biased composition (acidic residues); that stretch reads GEAEDDSDDDADE. Positions 59-74 are enriched in basic residues; sequence AKKKKKRKSKKKKKGG. Residue His198 coordinates substrate. 3 residues coordinate a divalent metal cation: Asp218, Asp229, and His298. His306 is a binding site for substrate. Residues Glu331 and Glu426 each coordinate a divalent metal cation.

The protein belongs to the peptidase M24A family. Methionine aminopeptidase eukaryotic type 2 subfamily. It depends on Co(2+) as a cofactor. Zn(2+) serves as cofactor. The cofactor is Mn(2+). Fe(2+) is required as a cofactor.

It localises to the cytoplasm. The enzyme catalyses Release of N-terminal amino acids, preferentially methionine, from peptides and arylamides.. Functionally, cotranslationally removes the N-terminal methionine from nascent proteins. The N-terminal methionine is often cleaved when the second residue in the primary sequence is small and uncharged (Met-Ala-, Cys, Gly, Pro, Ser, Thr, or Val). The sequence is that of Methionine aminopeptidase 2-1 from Aspergillus flavus (strain ATCC 200026 / FGSC A1120 / IAM 13836 / NRRL 3357 / JCM 12722 / SRRC 167).